A 1937-amino-acid chain; its full sequence is Myosin-8 (1937 aa).

Residues 35-84 enclose the Myosin N-terminal SH3-like domain; it reads DAKTSVFVAEPKESYVKSVIQSKDGGKVTVKTESGATLTVKEDQVFPMNP. Phosphothreonine occurs at positions 66 and 71. A Myosin motor domain is found at 88–781; that stretch reads DKIEDMAMMT…LLGLLEEMRD (694 aa). The residue at position 132 (Lys-132) is an N6,N6,N6-trimethyllysine. Residue 181 to 188 participates in ATP binding; the sequence is GESGAGKT. Tyr-389 carries the post-translational modification Phosphotyrosine. Thr-419 bears the Phosphothreonine mark. Tyr-424 bears the Phosphotyrosine mark. Position 625 is a phosphoserine (Ser-625). The tract at residues 658–680 is actin-binding; that stretch reads LNKLMTNLRSTHPHFVRCIIPNE. His-756 bears the Pros-methylhistidine mark. Positions 760 to 774 are actin-binding; it reads KFGHTKVFFKAGLLG. One can recognise an IQ domain in the interval 781–813; it reads DEKLAQIITRTQAVCRGYLMRVEYQKMLLRRES. The stretch at 842–1937 forms a coiled coil; that stretch reads LLKSAETEKE…REVHTKISAE (1096 aa). A phosphoserine mark is found at Ser-1091 and Ser-1095. A disordered region spans residues 1125 to 1171; that stretch reads IEAERASRAKAEKQRSDLSRELEEISERLEEAGGATSAQVEMNKKRE. Basic and acidic residues predominate over residues 1127-1155; it reads AERASRAKAEKQRSDLSRELEEISERLEE. Phosphoserine is present on residues Ser-1161 and Ser-1236. Position 1254 is a phosphothreonine (Thr-1254). Ser-1260 carries the phosphoserine modification. At Thr-1285 the chain carries Phosphothreonine. Ser-1291, Ser-1302, and Ser-1305 each carry phosphoserine. Residue Tyr-1463 is modified to Phosphotyrosine. Thr-1466 carries the post-translational modification Phosphothreonine. The residue at position 1491 (Tyr-1491) is a Phosphotyrosine. Ser-1494 carries the phosphoserine modification. Phosphothreonine is present on Thr-1500. At Ser-1513 the chain carries Phosphoserine. A Phosphothreonine modification is found at Thr-1516. A phosphoserine mark is found at Ser-1553, Ser-1573, Ser-1602, Ser-1713, and Ser-1725. Phosphothreonine is present on Thr-1729. At Ser-1738 the chain carries Phosphoserine.

This sequence belongs to the TRAFAC class myosin-kinesin ATPase superfamily. Myosin family. As to quaternary structure, muscle myosin is a hexameric protein that consists of 2 heavy chain subunits (MHC), 2 alkali light chain subunits (MLC) and 2 regulatory light chain subunits (MLC-2).

The protein localises to the cytoplasm. Its subcellular location is the myofibril. Muscle contraction. The protein is Myosin-8 (Myh8) of Mus musculus (Mouse).